A 318-amino-acid chain; its full sequence is MTLSSDSRLRFPLEEVGAQLLAYWQLTKPRIILLLLITTAAGMGLAAQGPLDPRLAIATLIGGGLAAAAANTLNCLYDRDIDAIMERTRWRPLPSGRIQPFEAWAFALSLAALSFILLDWQANQLAAGLALAGIVFYVVIYTHGLKRHSSQNIVIGGAAGAIPPLVGWAAVTGELAWPAWILFAIVCLWTPPHFWALALMIRDDYAAVKVPMLPVVVGNAATAQQILAYAGLLLPTTLALAWPLGAAGPFYSATALLLGLELLRRSRQLCQAPDSRPLARSLFKFSIFYLMLLCGAIAMDCLPGAPSLSQAIAAWPGF.

A run of 9 helical transmembrane segments spans residues 31–51, 55–75, 98–118, 125–145, 153–173, 181–201, 206–228, 238–260, and 285–305; these read IILL…QGPL, LAIA…TLNC, IQPF…FILL, LAAG…THGL, IVIG…AVTG, ILFA…ALMI, AAVK…QILA, LALA…LLGL, and FSIF…LPGA.

It belongs to the UbiA prenyltransferase family. Protoheme IX farnesyltransferase subfamily.

It localises to the cell inner membrane. It carries out the reaction heme b + (2E,6E)-farnesyl diphosphate + H2O = Fe(II)-heme o + diphosphate. It participates in porphyrin-containing compound metabolism; heme O biosynthesis; heme O from protoheme: step 1/1. In terms of biological role, converts heme B (protoheme IX) to heme O by substitution of the vinyl group on carbon 2 of heme B porphyrin ring with a hydroxyethyl farnesyl side group. This chain is Protoheme IX farnesyltransferase, found in Synechococcus elongatus (strain ATCC 33912 / PCC 7942 / FACHB-805) (Anacystis nidulans R2).